A 735-amino-acid chain; its full sequence is MKKPLNSAEEKKTGDITKAEIEAIKSGLHSNPFALLGVHETPEGFSARCFIPGAEEVSVLTLDGNFVGELKQIDPDGFFEGRIDLSKRQPVRYRACRDDAEWAVTDPYSFGPVLGPMDDYFVREGSHLRLFDRMGAHPLKLEGVEGFHFAVWAPNARRVSVVGDFNNWDGRRHVMRFRKDTGIWEIFAPDVYAGCAYKFEILGANGELLPLKADPYARRGELRPKNASVTAPELTQKWEDQAHREHWAQVDQRRQPISIYEVHAGSWQRREDGTFLSWDELAAQLIPYCTDMGFTHIEFLPITEHPYDPSWGYQTTGLYAPTARFGDPEGFARFVNGAHKVGIGVLLDWVPAHFPTDEHGLRWFDGTALYEHADPRQGFHPDWNTAIYNFGRIEVMSYLINNALYWAEKFHLDGLRVDAVASMLYLDYSRKEGEWIPNEYGGRENLESVRFLQKMNSLVYGTHPGVMTIAEESTSWPKVSQPVHEGGLGFGFKWNMGFMHDTLSYFSREPVHRKFHHQELTFGLLYAFTENFVLPLSHDEVVHGKGSLIAKMSGDDWQKFANLRSYYGFMWGYPGKKLLFMGQEFAQWSEWSEKGSLDWNLRQYPMHEGMRRLVRDLNLTYRSKAALHARDCEPDGFRWLVVDDHENSVFAWLRTAPGEKPVAVICNLTPVYRENYYVPLPVAGRWREILNTDAEIYGGSGKGNGGRVQAVDAGGEIGAMLVLPPLATIMLEPEN.

Asp418 (nucleophile) is an active-site residue. The active-site Proton donor is Glu471.

The protein belongs to the glycosyl hydrolase 13 family. GlgB subfamily. In terms of assembly, monomer.

It catalyses the reaction Transfers a segment of a (1-&gt;4)-alpha-D-glucan chain to a primary hydroxy group in a similar glucan chain.. It participates in glycan biosynthesis; glycogen biosynthesis. Its function is as follows. Catalyzes the formation of the alpha-1,6-glucosidic linkages in glycogen by scission of a 1,4-alpha-linked oligosaccharide from growing alpha-1,4-glucan chains and the subsequent attachment of the oligosaccharide to the alpha-1,6 position. In Agrobacterium fabrum (strain C58 / ATCC 33970) (Agrobacterium tumefaciens (strain C58)), this protein is 1,4-alpha-glucan branching enzyme GlgB.